Consider the following 371-residue polypeptide: Cytochrome b (371 aa).

Transmembrane regions (helical) follow at residues 25–45 (FGSMLLTCTALQISTGFFLAV), 69–90 (WIMQNLHAIGASLFFLCIYIHI), 105–125 (WLSGTTLLIILMATAFFGYVL), and 170–190 (FFALHFILPFLITSLSSIHII). The heme b site is built by His-75 and His-89. Residues His-174 and His-188 each coordinate heme b. Position 193 (His-193) interacts with a ubiquinone. 4 helical membrane passes run 218–238 (YKDMFMISSMITLLFIVLSFM), 280–300 (LGGTLALLMSVIILTTTPFTH), 312–332 (LTQALFWTLIATFITITWTAT), and 339–358 (FTLISQVASVTYFSFFIINP).

Belongs to the cytochrome b family. In terms of assembly, the cytochrome bc1 complex contains 3 respiratory subunits (MT-CYB, CYC1 and UQCRFS1), 2 core proteins (UQCRC1 and UQCRC2) and probably 6 low-molecular weight proteins. Heme b serves as cofactor.

Its subcellular location is the mitochondrion inner membrane. Functionally, component of the ubiquinol-cytochrome c reductase complex (complex III or cytochrome b-c1 complex) that is part of the mitochondrial respiratory chain. The b-c1 complex mediates electron transfer from ubiquinol to cytochrome c. Contributes to the generation of a proton gradient across the mitochondrial membrane that is then used for ATP synthesis. This Toxicocalamus preussi (Preuss's forest snake) protein is Cytochrome b (MT-CYB).